We begin with the raw amino-acid sequence, 406 residues long: Corticosteroid-binding globulin (406 aa).

The N-terminal stretch at 1 to 22 (MLLTLYACLLWLSTSGLWTSQA) is a signal peptide. 3 N-linked (GlcNAc...) asparagine glycosylation sites follow: asparagine 95, asparagine 119, and asparagine 223. Glutamine 253 serves as a coordination point for cortisol. The N-linked (GlcNAc...) asparagine glycan is linked to asparagine 259. Residues glutamine 285 and tryptophan 394 each coordinate cortisol.

The protein belongs to the serpin family.

It is found in the secreted. Functionally, major transport protein for glucocorticoids and progestins in the blood of almost all vertebrate species. The polypeptide is Corticosteroid-binding globulin (Serpina6) (Sus scrofa (Pig)).